Consider the following 338-residue polypeptide: Uroporphyrinogen decarboxylase (338 aa).

Substrate is bound by residues 27–31 (RQAGR), D77, Y151, S203, and H317.

This sequence belongs to the uroporphyrinogen decarboxylase family. As to quaternary structure, homodimer.

The protein localises to the cytoplasm. It carries out the reaction uroporphyrinogen III + 4 H(+) = coproporphyrinogen III + 4 CO2. Its pathway is porphyrin-containing compound metabolism; protoporphyrin-IX biosynthesis; coproporphyrinogen-III from 5-aminolevulinate: step 4/4. Functionally, catalyzes the decarboxylation of four acetate groups of uroporphyrinogen-III to yield coproporphyrinogen-III. This is Uroporphyrinogen decarboxylase from Wolbachia sp. subsp. Drosophila simulans (strain wRi).